The following is a 2067-amino-acid chain: Dedicator of cytokinesis protein 11 (2067 aa).

A PH domain is found at 162–269 (GVMKQGWLQK…WVNTIKQALL (108 aa)). The segment at 274 to 302 (DRRNGSETSEGSLDDDSSSQGKPESITES) is disordered. The segment covering 291 to 302 (SSQGKPESITES) has biased composition (polar residues). Residues 643–820 (NNHLYIYPQQ…PLFKVRAYVA (178 aa)) form the C2 DOCK-type domain. A disordered region spans residues 1224–1267 (SSTIVDKEPSGSVTQNGLSRRGESRGSMYGDPGTPDINELHRRG). The DOCKER domain maps to 1614–2040 (RSYASTPELR…LSEIIHEQIF (427 aa)).

This sequence belongs to the DOCK family.

Functionally, guanine nucleotide-exchange factor (GEF) that activates CDC42 by exchanging bound GDP for free GTP. The protein is Dedicator of cytokinesis protein 11 of Danio rerio (Zebrafish).